The chain runs to 736 residues: Phosphoribosylformylglycinamidine synthase subunit PurL (736 aa).

Residue histidine 48 is part of the active site. Residues tyrosine 51 and lysine 90 each coordinate ATP. Glutamate 92 provides a ligand contact to Mg(2+). Substrate-binding positions include 93 to 96 (SHNH) and arginine 115. Residue histidine 94 is the Proton acceptor of the active site. Residue aspartate 116 coordinates Mg(2+). Glutamine 239 serves as a coordination point for substrate. Aspartate 267 provides a ligand contact to Mg(2+). Residue 311 to 313 (ESQ) coordinates substrate. Residues aspartate 492 and glycine 529 each coordinate ATP. Asparagine 530 is a Mg(2+) binding site. A substrate-binding site is contributed by serine 532.

This sequence belongs to the FGAMS family. As to quaternary structure, monomer. Part of the FGAM synthase complex composed of 1 PurL, 1 PurQ and 2 PurS subunits.

The protein resides in the cytoplasm. The enzyme catalyses N(2)-formyl-N(1)-(5-phospho-beta-D-ribosyl)glycinamide + L-glutamine + ATP + H2O = 2-formamido-N(1)-(5-O-phospho-beta-D-ribosyl)acetamidine + L-glutamate + ADP + phosphate + H(+). It functions in the pathway purine metabolism; IMP biosynthesis via de novo pathway; 5-amino-1-(5-phospho-D-ribosyl)imidazole from N(2)-formyl-N(1)-(5-phospho-D-ribosyl)glycinamide: step 1/2. In terms of biological role, part of the phosphoribosylformylglycinamidine synthase complex involved in the purines biosynthetic pathway. Catalyzes the ATP-dependent conversion of formylglycinamide ribonucleotide (FGAR) and glutamine to yield formylglycinamidine ribonucleotide (FGAM) and glutamate. The FGAM synthase complex is composed of three subunits. PurQ produces an ammonia molecule by converting glutamine to glutamate. PurL transfers the ammonia molecule to FGAR to form FGAM in an ATP-dependent manner. PurS interacts with PurQ and PurL and is thought to assist in the transfer of the ammonia molecule from PurQ to PurL. This chain is Phosphoribosylformylglycinamidine synthase subunit PurL, found in Bradyrhizobium diazoefficiens (strain JCM 10833 / BCRC 13528 / IAM 13628 / NBRC 14792 / USDA 110).